The following is a 2144-amino-acid chain: Polyketide synthase-like protein Preu9 (2144 aa).

The region spanning 1–250 is the Ketosynthase family 3 (KS3) domain; it reads MYALHLAVNA…GANAHCIIDH (250 aa). Residues 276-325 form a disordered region; that stretch reads QNGHLNEFAANGTTNAPSRDHRNGITDGRADGNTNGHPNANGDVGGNPIN. Basic and acidic residues predominate over residues 293–305; it reads SRDHRNGITDGRA. Residues 435 to 738 are malonyl-CoA:ACP transacylase (MAT); sequence FVFTGQGAQW…KSPVEQILKS (304 aa). The tract at residues 827–965 is N-terminal hotdog fold; the sequence is HDLLGSKVVG…GCVKLIIKSS (139 aa). Residues 827 to 1137 are dehydratase (DH) domain; the sequence is HDLLGSKVVG…ERLRCVSYSR (311 aa). Residues 827–1141 form the PKS/mFAS DH domain; sequence HDLLGSKVVG…CVSYSRISSD (315 aa). H859 acts as the Proton acceptor; for dehydratase activity in catalysis. Residues 979 to 1141 are C-terminal hotdog fold; sequence TLRPVDVRAW…CVSYSRISSD (163 aa). D1050 (proton donor; for dehydratase activity) is an active-site residue. The methyltransferase (MT) domain stretch occupies residues 1305-1494; that stretch reads TGIYPQLHRI…GLDVVLDDFP (190 aa). The segment at 1731-2042 is enoyl reductase (ER) domain; it reads GVPNSLCFAS…LANMIGKLVV (312 aa).

Functionally, polyketide synthase-like protein that lacks important domains such as carrier domain and does probably not function as a polyketide synthase. The sequence is that of Polyketide synthase-like protein Preu9 from Preussia isomera (Coprophilous fungus).